Reading from the N-terminus, the 626-residue chain is Myelin-associated glycoprotein (626 aa).

A signal peptide spans 1–19 (MIFLTALPLFWIMISASRG). Residues 20 to 325 (GHWGAWMPSS…RTVGLSVMYA (306 aa)) form an interaction with RTN4R and RTN4RL2 region. The Extracellular portion of the chain corresponds to 20 to 516 (GHWGAWMPSS…HRLMWAKIGP (497 aa)). An Ig-like V-type domain is found at 22-120 (WGAWMPSSIS…LGGKYYFRGD (99 aa)). Intrachain disulfides connect Cys-37/Cys-165, Cys-42/Cys-100, and Cys-159/Cys-217. A ganglioside GT1b (d18:1(4E)) is bound at residue 65-67 (YPK). N-linked (GlcNAc...) asparagine glycosylation occurs at Asn-99. An N-linked (GlcNAc...) asparagine; partial glycan is attached at Asn-106. A ganglioside GT1b (d18:1(4E)) contacts are provided by residues Arg-118 and 124-128 (YNQYT). Ig-like C2-type domains follow at residues 139 to 237 (NTPN…MDVK), 241 to 325 (VIVE…VMYA), 327 to 412 (WKPT…VEFA), and 413 to 508 (PVLL…GAHR). Residues Asn-223 and Asn-246 are each glycosylated (N-linked (GlcNAc...) asparagine). Cys-261 and Cys-305 are joined by a disulfide. Residue Asn-315 is glycosylated (N-linked (GlcNAc...) asparagine). An intrachain disulfide couples Cys-347 to Cys-392. Asn-406 carries N-linked (GlcNAc...) asparagine glycosylation. Cystine bridges form between Cys-421-Cys-430 and Cys-432-Cys-488. Residues Asn-450 and Asn-454 are each glycosylated (N-linked (GlcNAc...) asparagine). Residues 517–536 (VGAVVAFAILIAIVCYITQT) form a helical membrane-spanning segment. Cys-531 carries the S-palmitoyl cysteine lipid modification. Residues 537-626 (RRKKNVTESP…LAEYAEIRVK (90 aa)) are Cytoplasmic-facing. Phosphoserine occurs at positions 545, 547, and 549. The required for normal axon myelination in the central nervous system stretch occupies residues 577–626 (LGSERRLLGLRGEPPELDLSYSHSDLGKRPTKDSYTLTEELAEYAEIRVK). Residues 582 to 608 (RLLGLRGEPPELDLSYSHSDLGKRPTK) form a disordered region.

The protein belongs to the immunoglobulin superfamily. SIGLEC (sialic acid binding Ig-like lectin) family. In terms of assembly, monomer and homodimer. Interacts (via the first three N-terminal Ig-like domains) with RTN4R and RTN4RL2. Interacts with RTN4R. Interacts with isoform 2 of BSG. In terms of processing, N-glycosylated. Post-translationally, phosphorylated on tyrosine residues. Ubiquitinated, leading to proteasomal degradation. In terms of tissue distribution, both isoform 1 and isoform 2 are detected in myelinated structures in the central and peripheral nervous system, in periaxonal myelin and at Schmidt-Lanterman incisures. Detected in optic nerve, in oligodendroglia and in periaxonal myelin sheaths. Detected in compact myelin (at protein level). Both isoform 1 and isoform 2 are detected in the central and peripheral nervous system.

It localises to the cell membrane. Its subcellular location is the membrane raft. Its function is as follows. Adhesion molecule that mediates interactions between myelinating cells and neurons by binding to neuronal sialic acid-containing gangliosides and to the glycoproteins RTN4R and RTN4RL2. Not required for initial myelination, but seems to play a role in the maintenance of normal axon myelination. Protects motoneurons against apoptosis, also after injury; protection against apoptosis is probably mediated via interaction with neuronal RTN4R and RTN4RL2. Required to prevent degeneration of myelinated axons in adults; this probably depends on binding to gangliosides on the axon cell membrane. Negative regulator of neurite outgrowth; in dorsal root ganglion neurons the inhibition is mediated primarily via binding to neuronal RTN4R or RTN4RL2 and to a lesser degree via binding to neuronal gangliosides. In cerebellar granule cells the inhibition is mediated primarily via binding to neuronal gangliosides. In sensory neurons, inhibition of neurite extension depends only partially on RTN4R, RTN4RL2 and gangliosides. Inhibits axon longitudinal growth. Inhibits axon outgrowth by binding to RTN4R. Preferentially binds to alpha-2,3-linked sialic acid. Binds ganglioside Gt1b. The chain is Myelin-associated glycoprotein (MAG) from Homo sapiens (Human).